Here is a 374-residue protein sequence, read N- to C-terminus: Queuine tRNA-ribosyltransferase (374 aa).

Asp90 serves as the catalytic Proton acceptor. Substrate contacts are provided by residues Asp90 to Phe94, Asp144, Gln193, and Gly220. Residues Gly251–Asp257 are RNA binding. Asp270 functions as the Nucleophile in the catalytic mechanism. Residues Thr275–Arg279 are RNA binding; important for wobble base 34 recognition. Positions 308, 310, 313, and 339 each coordinate Zn(2+).

Belongs to the queuine tRNA-ribosyltransferase family. In terms of assembly, homodimer. Within each dimer, one monomer is responsible for RNA recognition and catalysis, while the other monomer binds to the replacement base PreQ1. It depends on Zn(2+) as a cofactor.

It carries out the reaction 7-aminomethyl-7-carbaguanine + guanosine(34) in tRNA = 7-aminomethyl-7-carbaguanosine(34) in tRNA + guanine. The protein operates within tRNA modification; tRNA-queuosine biosynthesis. Its function is as follows. Catalyzes the base-exchange of a guanine (G) residue with the queuine precursor 7-aminomethyl-7-deazaguanine (PreQ1) at position 34 (anticodon wobble position) in tRNAs with GU(N) anticodons (tRNA-Asp, -Asn, -His and -Tyr). Catalysis occurs through a double-displacement mechanism. The nucleophile active site attacks the C1' of nucleotide 34 to detach the guanine base from the RNA, forming a covalent enzyme-RNA intermediate. The proton acceptor active site deprotonates the incoming PreQ1, allowing a nucleophilic attack on the C1' of the ribose to form the product. After dissociation, two additional enzymatic reactions on the tRNA convert PreQ1 to queuine (Q), resulting in the hypermodified nucleoside queuosine (7-(((4,5-cis-dihydroxy-2-cyclopenten-1-yl)amino)methyl)-7-deazaguanosine). This Campylobacter fetus subsp. fetus (strain 82-40) protein is Queuine tRNA-ribosyltransferase.